A 160-amino-acid polypeptide reads, in one-letter code: Cytochrome b6-f complex subunit 4 (160 aa).

Transmembrane regions (helical) follow at residues Leu36 to Val56, Leu95 to Glu115, and Ile128 to Cys148.

Belongs to the cytochrome b family. PetD subfamily. In terms of assembly, the 4 large subunits of the cytochrome b6-f complex are cytochrome b6, subunit IV (17 kDa polypeptide, PetD), cytochrome f and the Rieske protein, while the 4 small subunits are PetG, PetL, PetM and PetN. The complex functions as a dimer.

It is found in the cellular thylakoid membrane. Functionally, component of the cytochrome b6-f complex, which mediates electron transfer between photosystem II (PSII) and photosystem I (PSI), cyclic electron flow around PSI, and state transitions. This Prochlorococcus marinus (strain MIT 9312) protein is Cytochrome b6-f complex subunit 4.